The chain runs to 469 residues: tRNA-2-methylthio-N(6)-dimethylallyladenosine synthase (469 aa).

One can recognise an MTTase N-terminal domain in the interval 22-142 (RKVFIKTYGC…LPEALRRAKE (121 aa)). [4Fe-4S] cluster contacts are provided by C31, C67, C105, C183, C187, and C190. The Radical SAM core domain occupies 169–401 (RARGVTAFLT…QALLLKQQQE (233 aa)). The 63-residue stretch at 404-466 (ESCIGKEIDL…TNSLFAERAE (63 aa)) folds into the TRAM domain.

It belongs to the methylthiotransferase family. MiaB subfamily. In terms of assembly, monomer. [4Fe-4S] cluster is required as a cofactor.

Its subcellular location is the cytoplasm. It catalyses the reaction N(6)-dimethylallyladenosine(37) in tRNA + (sulfur carrier)-SH + AH2 + 2 S-adenosyl-L-methionine = 2-methylsulfanyl-N(6)-dimethylallyladenosine(37) in tRNA + (sulfur carrier)-H + 5'-deoxyadenosine + L-methionine + A + S-adenosyl-L-homocysteine + 2 H(+). In terms of biological role, catalyzes the methylthiolation of N6-(dimethylallyl)adenosine (i(6)A), leading to the formation of 2-methylthio-N6-(dimethylallyl)adenosine (ms(2)i(6)A) at position 37 in tRNAs that read codons beginning with uridine. This Rhizobium etli (strain ATCC 51251 / DSM 11541 / JCM 21823 / NBRC 15573 / CFN 42) protein is tRNA-2-methylthio-N(6)-dimethylallyladenosine synthase.